Here is a 131-residue protein sequence, read N- to C-terminus: Beta/delta-urticatoxin-Dm2a (131 aa).

Positions 1-24 (MKSSATVVLLVAAVTAAMVMSSSA) are cleaved as a signal peptide. Residues 25–69 (SGDAVMIDEHNNIMTSVEGKRGIGSSVVANGGNRKMANVLLSGWE) constitute a propeptide that is removed on maturation. Intrachain disulfides connect Cys-72–Cys-88, Cys-79–Cys-93, Cys-87–Cys-101, Cys-103–Cys-117, Cys-110–Cys-122, and Cys-116–Cys-130.

This sequence belongs to the urticatoxin-2 family. As to expression, expressed in trichomes, that are stiff epidermal hairs located on the surface of petioles and leaves.

Its subcellular location is the secreted. In terms of biological role, plant defense neurotoxin that causes pain and systemic symptoms in mammals via modulation of voltage-gated sodium channels (Nav). Potent modulator of human Nav1.5/SCN5A (EC(50)=55 nM), Nav1.6/SCN8A (EC(50)=0.86 nM), and Nav1.7/SCN9A (EC(50)=208 nM), where it shifts the activation threshold to more negative potentials and delays fast inactivation. Also shifts the voltage-dependence of steady-state fast inactivation of Nav1.6/SCN8A, but not that of Nav1.5/SCN5A or Nav1.7/SCN9A. On Nav1.7/SCN9A, principally acts by binding to extracellular loops of domain IV (Nav site 3). In vivo, intraplantar injection into mice causes numerous dose-dependent, immediate, and long-lasting spontaneous pain behaviors, while no swelling is observed in the injected paw. At the highest doses tested, systemic symptoms including hypokinesia and hypersalivation are observed. In Dendrocnide moroides (Gympie stinging tree), this protein is Beta/delta-urticatoxin-Dm2a.